Here is a 422-residue protein sequence, read N- to C-terminus: Serine--tRNA ligase (422 aa).

Residue 231–233 (TAE) coordinates L-serine. 261 to 263 (RSE) is an ATP binding site. Glu-284 contributes to the L-serine binding site. 348–351 (EISS) contacts ATP. Position 383 (Ser-383) interacts with L-serine.

It belongs to the class-II aminoacyl-tRNA synthetase family. Type-1 seryl-tRNA synthetase subfamily. As to quaternary structure, homodimer. The tRNA molecule binds across the dimer.

It localises to the cytoplasm. It catalyses the reaction tRNA(Ser) + L-serine + ATP = L-seryl-tRNA(Ser) + AMP + diphosphate + H(+). The catalysed reaction is tRNA(Sec) + L-serine + ATP = L-seryl-tRNA(Sec) + AMP + diphosphate + H(+). It functions in the pathway aminoacyl-tRNA biosynthesis; selenocysteinyl-tRNA(Sec) biosynthesis; L-seryl-tRNA(Sec) from L-serine and tRNA(Sec): step 1/1. Functionally, catalyzes the attachment of serine to tRNA(Ser). Is also able to aminoacylate tRNA(Sec) with serine, to form the misacylated tRNA L-seryl-tRNA(Sec), which will be further converted into selenocysteinyl-tRNA(Sec). This is Serine--tRNA ligase from Mycoplasmopsis agalactiae (strain NCTC 10123 / CIP 59.7 / PG2) (Mycoplasma agalactiae).